Reading from the N-terminus, the 523-residue chain is Alpha,alpha-trehalose-phosphate synthase [UDP-forming] (523 aa).

D-glucose 6-phosphate-binding residues include Y98 and D152. UDP contacts are provided by R288 and K293. UDP-alpha-D-glucose contacts are provided by R288 and K293. R326 serves as a coordination point for D-glucose 6-phosphate. 387-395 lines the UDP-alpha-D-glucose pocket; that stretch reads DGMNLVSYE. 391 to 395 is a binding site for UDP; sequence LVSYE. Residues 503–523 are disordered; it reads QQFNLGEQREEGRLEPGEFDD. Over residues 509 to 523 the composition is skewed to basic and acidic residues; the sequence is EQREEGRLEPGEFDD.

It belongs to the glycosyltransferase 20 family.

The enzyme catalyses D-glucose 6-phosphate + UDP-alpha-D-glucose = alpha,alpha-trehalose 6-phosphate + UDP + H(+). The protein operates within carbohydrate biosynthesis. Synthase catalytic subunit of the trehalose synthase complex that catalyzes the production of trehalose from glucose-6-phosphate and UDP-alpha-D-glucose in a two step process. The disaccharide trehalose serves as a storage carbohydrate that is mobilized during conidial germination. Trehalose also serves as a protectant for cell integrity during stress. This chain is Alpha,alpha-trehalose-phosphate synthase [UDP-forming], found in Botryotinia fuckeliana (strain B05.10) (Noble rot fungus).